A 369-amino-acid polypeptide reads, in one-letter code: MRN complex-interacting protein (369 aa).

Phosphoserine is present on Ser115. Disordered stretches follow at residues 122 to 150 (GGGV…PRKR), 209 to 245 (PSFT…PCPA), and 282 to 317 (AQAE…TPMP). Positions 148–151 (RKRK) match the Nuclear localization signal (NLS) motif. Residues 221-230 (KGRESSREDL) show a composition bias toward basic and acidic residues. The segment at 223–259 (RESSREDLDTMELVPRGEPPCPAQQVRTMSKWEQCLG) is necessary for the association with the MRN complex.

This sequence belongs to the MRNIP family. In terms of assembly, associates with the MRE11-RAD50-NBN (MRN) damage-sensing complex; this association is constitutive. Interacts with MRE11. Interacts with NBN. Interacts with RAD50. Phosphorylated; phosphorylation is constitutive and occurs in the absence of any DNA-damaging stimulus. Phosphorylation on Ser-115 is necessary for its nuclear retention.

The protein resides in the nucleus. It localises to the nucleoplasm. Functionally, plays a role in the cellular response to DNA damage and the maintenance of genome stability through its association with the MRN damage-sensing complex. Promotes chromatin loading and activity of the MRN complex to facilitate subsequent ATM-mediated DNA damage response signaling and DNA repair. The polypeptide is MRN complex-interacting protein (Bos taurus (Bovine)).